The following is a 530-amino-acid chain: DNA damage-binding protein cmr1 (530 aa).

Disordered stretches follow at residues 34-115 (VGLF…RKSD) and 224-250 (TKPVSAATHDEDEEDDDDDPDPVLTTL). Positions 52–62 (AKKKKPAPKKV) are enriched in basic residues. The span at 89 to 108 (EVAKRKADEHDAALQEAERA) shows a compositional bias: basic and acidic residues. The stretch at 188 to 229 (LTPERIYAMTFHPSESKPLIFAGDKMGHLGVLDASQTKPVSA) is one WD 1 repeat. Acidic residues predominate over residues 233–244 (DEDEEDDDDDPD). WD repeat units lie at residues 252–292 (PHTR…SVER), 302–339 (VPISGLDMALDDPHCLYWTTLDGEFGRYDMRTPRQDSA), 344–384 (LSDK…HKSP), 389–430 (EHES…ASWK), 453–496 (GRWV…LAQL), and 499–530 (DGITAVPAVAVFHRSKNWVAGGTASGKICLWM).

The protein belongs to the WD repeat DDB2/WDR76 family.

Functionally, DNA-binding protein that binds to both single- and double-stranded DNA. Binds preferentially to UV-damaged DNA. May be involved in DNA-metabolic processes. In Aspergillus terreus (strain NIH 2624 / FGSC A1156), this protein is DNA damage-binding protein cmr1.